A 60-amino-acid chain; its full sequence is Large ribosomal subunit protein uL30 (60 aa).

It belongs to the universal ribosomal protein uL30 family. Part of the 50S ribosomal subunit.

The protein is Large ribosomal subunit protein uL30 of Acidovorax ebreus (strain TPSY) (Diaphorobacter sp. (strain TPSY)).